A 469-amino-acid chain; its full sequence is 3-isopropylmalate dehydratase large subunit (469 aa).

[4Fe-4S] cluster is bound by residues Cys350, Cys410, and Cys413.

It belongs to the aconitase/IPM isomerase family. LeuC type 1 subfamily. As to quaternary structure, heterodimer of LeuC and LeuD. [4Fe-4S] cluster is required as a cofactor.

The enzyme catalyses (2R,3S)-3-isopropylmalate = (2S)-2-isopropylmalate. It functions in the pathway amino-acid biosynthesis; L-leucine biosynthesis; L-leucine from 3-methyl-2-oxobutanoate: step 2/4. Its function is as follows. Catalyzes the isomerization between 2-isopropylmalate and 3-isopropylmalate, via the formation of 2-isopropylmaleate. The polypeptide is 3-isopropylmalate dehydratase large subunit (Sinorhizobium medicae (strain WSM419) (Ensifer medicae)).